An 820-amino-acid polypeptide reads, in one-letter code: Leucine--tRNA ligase (820 aa).

A 'HIGH' region motif is present at residues 42-52; it reads PYPSGDLHMGH. Residues 576-580 carry the 'KMSKS' region motif; it reads KMSKS. Position 579 (lysine 579) interacts with ATP.

It belongs to the class-I aminoacyl-tRNA synthetase family.

It is found in the cytoplasm. It carries out the reaction tRNA(Leu) + L-leucine + ATP = L-leucyl-tRNA(Leu) + AMP + diphosphate. This is Leucine--tRNA ligase from Coxiella burnetii (strain Dugway 5J108-111).